The sequence spans 296 residues: Protein csh3 (296 aa).

The segment at 46–138 (ASPVTAPAAQ…PPSYPGPNTA (93 aa)) is disordered. Positions 93–103 (GEKRTPEEPRK) are enriched in basic and acidic residues. Polar residues predominate over residues 111 to 124 (QKQSEASSVNSSTE). The region spanning 140–199 (KNVERVLAMYDFPGPDAGDLGFHAGEVIIVLEHVNNDWWRGELNGKEGIFPSNYVRLLED) is the SH3 domain. The segment at 202–246 (VKAQPPPPPPQQNYPPAASSSAPPMQYQQTAYPPQQAPYPPVQAY) is disordered. Residues 205 to 214 (QPPPPPPQQN) show a composition bias toward pro residues. The segment covering 215–235 (YPPAASSSAPPMQYQQTAYPP) has biased composition (low complexity).

This is Protein csh3 (csh3) from Schizosaccharomyces pombe (strain 972 / ATCC 24843) (Fission yeast).